The primary structure comprises 116 residues: Ig heavy chain V region 441 (116 aa).

An N-terminal signal peptide occupies residues 1 to 18 (MDFGLIFFIVALLKGVQC). Residues 19 to 116 (EVKLLESGGG…EDTALYYCAR (98 aa)) enclose the Ig-like domain.

This is Ig heavy chain V region 441 from Mus musculus (Mouse).